A 150-amino-acid polypeptide reads, in one-letter code: Ribosomal RNA large subunit methyltransferase H (150 aa).

S-adenosyl-L-methionine is bound by residues alanine 100 and 118–123; that span reads LSEMTF.

Belongs to the RNA methyltransferase RlmH family. In terms of assembly, homodimer.

Its subcellular location is the cytoplasm. The enzyme catalyses pseudouridine(1915) in 23S rRNA + S-adenosyl-L-methionine = N(3)-methylpseudouridine(1915) in 23S rRNA + S-adenosyl-L-homocysteine + H(+). Its function is as follows. Specifically methylates the pseudouridine at position 1915 (m3Psi1915) in 23S rRNA. This is Ribosomal RNA large subunit methyltransferase H from Helicobacter pylori (strain J99 / ATCC 700824) (Campylobacter pylori J99).